Here is a 155-residue protein sequence, read N- to C-terminus: SsrA-binding protein (155 aa).

This sequence belongs to the SmpB family.

It localises to the cytoplasm. Required for rescue of stalled ribosomes mediated by trans-translation. Binds to transfer-messenger RNA (tmRNA), required for stable association of tmRNA with ribosomes. tmRNA and SmpB together mimic tRNA shape, replacing the anticodon stem-loop with SmpB. tmRNA is encoded by the ssrA gene; the 2 termini fold to resemble tRNA(Ala) and it encodes a 'tag peptide', a short internal open reading frame. During trans-translation Ala-aminoacylated tmRNA acts like a tRNA, entering the A-site of stalled ribosomes, displacing the stalled mRNA. The ribosome then switches to translate the ORF on the tmRNA; the nascent peptide is terminated with the 'tag peptide' encoded by the tmRNA and targeted for degradation. The ribosome is freed to recommence translation, which seems to be the essential function of trans-translation. This is SsrA-binding protein from Bordetella bronchiseptica (strain ATCC BAA-588 / NCTC 13252 / RB50) (Alcaligenes bronchisepticus).